Reading from the N-terminus, the 313-residue chain is Solute carrier family 35 member E3 (313 aa).

10 helical membrane passes run 14-34 (IIAGLLVNLLSSICIVFINKW), 40-60 (GFPNMTLTLIHFVMTWLGLFI), 77-97 (ILLLALSFCGFVVFTNLSLQS), 100-122 (IGTYQLAKVMTTPVIIAIQTMYY), 130-146 (IKLTLVPITLGVILNSY), 153-173 (LMGMIFATLGVLVTSLYQVWV), 187-207 (LLYYQAPMSSAFLLVLVPFFE), 215-235 (IFGPWSFLALFMVLLSGVIAF), 252-272 (TYNMFGHFKFCITLLGGYVLF), and 275-295 (PLSLNQGLGILCTLTGILAYT).

It belongs to the TPT transporter family. SLC35E subfamily.

It localises to the membrane. Its function is as follows. Putative transporter. The sequence is that of Solute carrier family 35 member E3 (slc35e3) from Danio rerio (Zebrafish).